A 631-amino-acid chain; its full sequence is DNA mismatch repair protein MutL (631 aa).

Disordered stretches follow at residues 337–362 (PHSP…ELQS) and 400–429 (AVQS…RAEL).

Belongs to the DNA mismatch repair MutL/HexB family.

In terms of biological role, this protein is involved in the repair of mismatches in DNA. It is required for dam-dependent methyl-directed DNA mismatch repair. May act as a 'molecular matchmaker', a protein that promotes the formation of a stable complex between two or more DNA-binding proteins in an ATP-dependent manner without itself being part of a final effector complex. The protein is DNA mismatch repair protein MutL of Shewanella oneidensis (strain ATCC 700550 / JCM 31522 / CIP 106686 / LMG 19005 / NCIMB 14063 / MR-1).